Here is a 220-residue protein sequence, read N- to C-terminus: MASSSATLSLCSTFSAHCNVNSRRSSTILCSLSKPSLNLAKPLTGFLSPSTASTSRTAFTVAPKFAESVVEAEPETTDIEAVVVSDVSEVTEEKAKREEIFAVIMVGGRQYIVFPGRYLYTQRLKDANVDDQIVLNKVLLVGTKTHTYIGKPVVTNATVHAVVESQGLNDKVVVFKYKPKKKYRRNIGHRQPNTRIRITGITGYEEYPASPNVAVGEVNL.

The protein belongs to the bacterial ribosomal protein bL21 family. As to quaternary structure, part of the 50S ribosomal subunit.

Its subcellular location is the plastid. It localises to the chloroplast. Functionally, this protein binds to 23S ribosomal RNA in the presence of protein L20. The protein is Large ribosomal subunit protein bL21c (RPL21) of Arabidopsis thaliana (Mouse-ear cress).